The sequence spans 125 residues: S-adenosylmethionine decarboxylase proenzyme (125 aa).

The active-site Schiff-base intermediate with substrate; via pyruvic acid is the S71. A Pyruvic acid (Ser); by autocatalysis modification is found at S71. H76 functions as the Proton acceptor; for processing activity in the catalytic mechanism. C91 serves as the catalytic Proton donor; for catalytic activity.

This sequence belongs to the prokaryotic AdoMetDC family. Type 1 subfamily. Heterotetramer of two alpha and two beta chains arranged as a dimer of alpha/beta heterodimers. Requires pyruvate as cofactor. Is synthesized initially as an inactive proenzyme. Formation of the active enzyme involves a self-maturation process in which the active site pyruvoyl group is generated from an internal serine residue via an autocatalytic post-translational modification. Two non-identical subunits are generated from the proenzyme in this reaction, and the pyruvate is formed at the N-terminus of the alpha chain, which is derived from the carboxyl end of the proenzyme. The post-translation cleavage follows an unusual pathway, termed non-hydrolytic serinolysis, in which the side chain hydroxyl group of the serine supplies its oxygen atom to form the C-terminus of the beta chain, while the remainder of the serine residue undergoes an oxidative deamination to produce ammonia and the pyruvoyl group blocking the N-terminus of the alpha chain.

The catalysed reaction is S-adenosyl-L-methionine + H(+) = S-adenosyl 3-(methylsulfanyl)propylamine + CO2. Its pathway is amine and polyamine biosynthesis; S-adenosylmethioninamine biosynthesis; S-adenosylmethioninamine from S-adenosyl-L-methionine: step 1/1. In terms of biological role, catalyzes the decarboxylation of S-adenosylmethionine to S-adenosylmethioninamine (dcAdoMet), the propylamine donor required for the synthesis of the polyamines spermine and spermidine from the diamine putrescine. This Pyrobaculum aerophilum (strain ATCC 51768 / DSM 7523 / JCM 9630 / CIP 104966 / NBRC 100827 / IM2) protein is S-adenosylmethionine decarboxylase proenzyme.